Reading from the N-terminus, the 227-residue chain is 7-cyano-7-deazaguanine synthase (227 aa).

9-19 (LSGGLDSATVL) provides a ligand contact to ATP. 4 residues coordinate Zn(2+): Cys189, Cys199, Cys202, and Cys205.

Belongs to the QueC family. The cofactor is Zn(2+).

It carries out the reaction 7-carboxy-7-deazaguanine + NH4(+) + ATP = 7-cyano-7-deazaguanine + ADP + phosphate + H2O + H(+). It functions in the pathway purine metabolism; 7-cyano-7-deazaguanine biosynthesis. In terms of biological role, catalyzes the ATP-dependent conversion of 7-carboxy-7-deazaguanine (CDG) to 7-cyano-7-deazaguanine (preQ(0)). The sequence is that of 7-cyano-7-deazaguanine synthase from Cupriavidus metallidurans (strain ATCC 43123 / DSM 2839 / NBRC 102507 / CH34) (Ralstonia metallidurans).